The following is a 137-amino-acid chain: Transcription antitermination protein NusB (137 aa).

This sequence belongs to the NusB family.

In terms of biological role, involved in transcription antitermination. Required for transcription of ribosomal RNA (rRNA) genes. Binds specifically to the boxA antiterminator sequence of the ribosomal RNA (rrn) operons. This is Transcription antitermination protein NusB from Proteus mirabilis (strain HI4320).